We begin with the raw amino-acid sequence, 66 residues long: MSQPMTVDCPTCGAPVEWGEKSPFRPFCSDRCKLIDLGAWAAEEHKIAGAEESEDELYSGDLEPRH.

Zn(2+) contacts are provided by Cys-9, Cys-12, Cys-28, and Cys-32. Residues 45–66 (HKIAGAEESEDELYSGDLEPRH) form a disordered region.

Belongs to the DNA gyrase inhibitor YacG family. Interacts with GyrB. Zn(2+) serves as cofactor.

Inhibits all the catalytic activities of DNA gyrase by preventing its interaction with DNA. Acts by binding directly to the C-terminal domain of GyrB, which probably disrupts DNA binding by the gyrase. The chain is DNA gyrase inhibitor YacG from Pseudomonas entomophila (strain L48).